We begin with the raw amino-acid sequence, 338 residues long: tRNA N6-adenosine threonylcarbamoyltransferase (338 aa).

Histidine 114 and histidine 118 together coordinate Fe cation. Substrate contacts are provided by residues 136–140, aspartate 169, glycine 182, aspartate 186, and asparagine 275; that span reads LVSGG. Residue aspartate 301 coordinates Fe cation.

This sequence belongs to the KAE1 / TsaD family. Fe(2+) serves as cofactor.

The protein resides in the cytoplasm. It catalyses the reaction L-threonylcarbamoyladenylate + adenosine(37) in tRNA = N(6)-L-threonylcarbamoyladenosine(37) in tRNA + AMP + H(+). Its function is as follows. Required for the formation of a threonylcarbamoyl group on adenosine at position 37 (t(6)A37) in tRNAs that read codons beginning with adenine. Is involved in the transfer of the threonylcarbamoyl moiety of threonylcarbamoyl-AMP (TC-AMP) to the N6 group of A37, together with TsaE and TsaB. TsaD likely plays a direct catalytic role in this reaction. The polypeptide is tRNA N6-adenosine threonylcarbamoyltransferase (Streptococcus equi subsp. equi (strain 4047)).